The following is a 335-amino-acid chain: Magnesium-protoporphyrin IX monomethyl ester [oxidative] cyclase (335 aa).

The protein belongs to the AcsF family. The cofactor is Fe cation.

It localises to the plastid. It is found in the chloroplast. It carries out the reaction Mg-protoporphyrin IX 13-monomethyl ester + 3 NADPH + 3 O2 + 2 H(+) = 3,8-divinyl protochlorophyllide a + 3 NADP(+) + 5 H2O. The protein operates within porphyrin-containing compound metabolism; chlorophyll biosynthesis (light-independent). Functionally, catalyzes the formation of the isocyclic ring in chlorophyll biosynthesis. Mediates the cyclase reaction, which results in the formation of divinylprotochlorophyllide (Pchlide) characteristic of all chlorophylls from magnesium-protoporphyrin IX 13-monomethyl ester (MgPMME). The polypeptide is Magnesium-protoporphyrin IX monomethyl ester [oxidative] cyclase (Cyanidioschyzon merolae (strain NIES-3377 / 10D) (Unicellular red alga)).